The chain runs to 608 residues: MVTKLFLRPHSLSFTLLSGIHLFPKTSLSKPITLCLLSTTATTPILTLTQTLDPNLSYGPSLHKGTKPLNHQNHQLIAATPGEEECVFDKEAFTRVFNLTAIRVPSKDCFALENRLRGHLLNWPRIRNVARVPGDEVEDGLVKLLGEKRNSSDGSESEGDFDSLNRRIYGKAEGDGEILSPVLYRDTLAKTFDSQGFANFRNLAKLSRPKKKKRRKEEERSEGKKRTGKNEFAMVEVVEDGEEGEDLRGLLGEEFKRKRWRGSTRLLLLDERYADKGVEELPEAIKAVLKEDTGQSMTSTFELVKCKLTLFYNYWQMNEILEALLPEGMIVPSAFEMVGHIAHLNLRDEHLPYKKLIAKVVLDKNKPKIQTVVNKTDAIHNDYRTMQLEVLAGNRSLVTTVIENGMRFQVDLATVYWNSRLATERQRLLNCFTRNDVVCDVFSGVGPIAISAAKKVKRVYANDLNPYAIEYLESNSVLNKLERKIKVFNMDGRRFINAMFTSDKAESITQVVMNLPNDAAEFLDAFRGIFRKKSRDKQLKLPMIHVYGFSKAQDPEFDFHQRIRIALSEVAVDVEMHRVRLVAPGKWMLRASFILPKSVVFAKAVLYM.

Residues 207–229 (SRPKKKKRRKEEERSEGKKRTGK) are disordered. Over residues 216-229 (KEEERSEGKKRTGK) the composition is skewed to basic and acidic residues. S-adenosyl-L-methionine-binding positions include Arg425, 463-464 (DL), 491-492 (DG), and Asn514.

It belongs to the class I-like SAM-binding methyltransferase superfamily. TRM5/TYW2 family. As to quaternary structure, monomer.

The protein resides in the mitochondrion matrix. The protein localises to the nucleus. It localises to the cytoplasm. It catalyses the reaction guanosine(37) in tRNA + S-adenosyl-L-methionine = N(1)-methylguanosine(37) in tRNA + S-adenosyl-L-homocysteine + H(+). Functionally, specifically methylates the N1 position of guanosine-37 in various cytoplasmic and mitochondrial tRNAs. Methylation is not dependent on the nature of the nucleoside 5' of the target nucleoside. This is the first step in the biosynthesis of wybutosine (yW), a modified base adjacent to the anticodon of tRNAs and required for accurate decoding. This is tRNA (guanine(37)-N(1))-methyltransferase 1 from Vitis vinifera (Grape).